Consider the following 503-residue polypeptide: Aromatase 2 (503 aa).

Cysteine 437 contacts heme.

Belongs to the cytochrome P450 family. The cofactor is heme.

It localises to the membrane. It catalyses the reaction testosterone + 3 reduced [NADPH--hemoprotein reductase] + 3 O2 = 17beta-estradiol + formate + 3 oxidized [NADPH--hemoprotein reductase] + 4 H2O + 4 H(+). The catalysed reaction is androst-4-ene-3,17-dione + 3 reduced [NADPH--hemoprotein reductase] + 3 O2 = estrone + formate + 3 oxidized [NADPH--hemoprotein reductase] + 4 H2O + 4 H(+). In terms of biological role, catalyzes the formation of aromatic C18 estrogens from C19 androgens. In Sus scrofa (Pig), this protein is Aromatase 2 (CYP19A2).